The following is a 704-amino-acid chain: MARTTPIARYRNIGISAHIDAGKTTTTERILFYTGVNHKIGEVHDGAATMDWMEQEQERGITITSAATTAFWSGMAKQYEPHRINIIDTPGHVDFTIEVERSMRVLDGAVMVYCAVGGVQPQSETVWRQANKYKVPRIAFVNKMDRMGANFLKVVGQIKTRLGANPVPLQLAIGAEEGFTGVVDLVKMKAINWNDADQGVTFEYEDIPADMQDLADEWHQNLIESAAEASEELMEKYLGGEELTEEEIKKALRQRVLNNEIILVTCGSAFKNKGVQAMLDAVIDYLPSPVDVPAINGILDDGKDTPAERHASDEEPFSALAFKIATDPFVGNLTFFRVYSGVVNSGDTILNSVKSARERFGRIVQMHANKREEIKEVRAGDIAAAIGLKDVTTGDTLCNPDHPIILERMEFPEPVISIAVEPKTKADQEKMGLALGRLAKEDPSFRVWTDEESNQTIIAGMGELHLDIIVDRMKREFNVEANVGKPQVAYREAIRSKVTDIEGKHAKQSGGRGQYGHVVIDMYPLEPGSNPKGYEFINDIKGGVIPGEYIPAVDKGIQEQLKSGPLAGYPVVDIGIRLHFGSYHDVDSSELAFKLAASIAFKEGFKKAKPVLLEPIMKVEVETPEENTGDVIGDLSRRRGMLRGQESEVTGVKIHAEVPLSEMFGYATQLRSLTKGRASYTMEFLKYDDAPNNVAQAVIEARGK.

Residues 8-290 form the tr-type G domain; the sequence is ARYRNIGISA…AVIDYLPSPV (283 aa). GTP is bound by residues 17-24, 88-92, and 142-145; these read AHIDAGKT, DTPGH, and NKMD.

It belongs to the TRAFAC class translation factor GTPase superfamily. Classic translation factor GTPase family. EF-G/EF-2 subfamily.

The protein localises to the cytoplasm. Catalyzes the GTP-dependent ribosomal translocation step during translation elongation. During this step, the ribosome changes from the pre-translocational (PRE) to the post-translocational (POST) state as the newly formed A-site-bound peptidyl-tRNA and P-site-bound deacylated tRNA move to the P and E sites, respectively. Catalyzes the coordinated movement of the two tRNA molecules, the mRNA and conformational changes in the ribosome. This is Elongation factor G from Cronobacter sakazakii (strain ATCC BAA-894) (Enterobacter sakazakii).